A 54-amino-acid chain; its full sequence is MKIFFAILLILAVCSMAIWTVNGTPFAIKCATDADCSRKCPGNPSCRNGFCACT.

The first 23 residues, 1–23, serve as a signal peptide directing secretion; the sequence is MKIFFAILLILAVCSMAIWTVNG.

It belongs to the short scorpion toxin superfamily. Potassium channel inhibitor family. Alpha-KTx 14 subfamily. Post-translationally, probably has three disulfide bridges. In terms of tissue distribution, expressed by the venom gland.

It localises to the secreted. Its function is as follows. Potential blocker of potassium channels. This chain is Potassium channel toxin alpha-KTx 14.1, found in Olivierus martensii (Manchurian scorpion).